Reading from the N-terminus, the 651-residue chain is Acetyl-coenzyme A synthetase (651 aa).

CoA-binding positions include 189-192 (RGGK), T311, and N335. Residues 387-389 (GEP), 411-416 (DTWWQT), D500, and R515 each bind ATP. S523 is a CoA binding site. Residue R526 participates in ATP binding. Mg(2+) contacts are provided by V537, H539, and V542. R584 contributes to the CoA binding site. K609 is modified (N6-acetyllysine).

This sequence belongs to the ATP-dependent AMP-binding enzyme family. Mg(2+) serves as cofactor. Post-translationally, acetylated. Deacetylation by the SIR2-homolog deacetylase activates the enzyme.

It catalyses the reaction acetate + ATP + CoA = acetyl-CoA + AMP + diphosphate. Catalyzes the conversion of acetate into acetyl-CoA (AcCoA), an essential intermediate at the junction of anabolic and catabolic pathways. AcsA undergoes a two-step reaction. In the first half reaction, AcsA combines acetate with ATP to form acetyl-adenylate (AcAMP) intermediate. In the second half reaction, it can then transfer the acetyl group from AcAMP to the sulfhydryl group of CoA, forming the product AcCoA. The sequence is that of Acetyl-coenzyme A synthetase from Rhizobium etli (strain ATCC 51251 / DSM 11541 / JCM 21823 / NBRC 15573 / CFN 42).